The sequence spans 822 residues: Telomere length regulation protein TEL2 homolog (822 aa).

The tract at residues 442 to 504 (NDDEEEQPDA…ADQEKKKSAP (63 aa)) is disordered. Residues 465–477 (VSSQSVASDPGNG) show a composition bias toward polar residues. A compositionally biased stretch (acidic residues) spans 480–489 (SELDSDDDLT).

The protein belongs to the TEL2 family.

It is found in the cytoplasm. The protein localises to the membrane. It localises to the nucleus. In terms of biological role, regulator of the DNA damage response (DDR). Part of the TTT complex that is required to stabilize protein levels of the phosphatidylinositol 3-kinase-related protein kinase (PIKK) family proteins. Promotes assembly, stabilizes and maintains the activity of TORC complexes, which regulate cell growth and survival in response to nutrient and hormonal signals. May be involved in telomere length regulation. In Danio rerio (Zebrafish), this protein is Telomere length regulation protein TEL2 homolog (telo2).